Reading from the N-terminus, the 316-residue chain is Alpha- and gamma-adaptin-binding protein p34 (316 aa).

A disordered region spans residues 198 to 232 (ASAESCHSEQQEPSPTAERTESLPGHHSGACGSAG). A compositionally biased stretch (low complexity) spans 222–232 (GHHSGACGSAG). Ser-311 and Ser-312 each carry phosphoserine.

As to quaternary structure, associated with AP-1 and AP-2 complexes.

The protein resides in the cytoplasm. Its subcellular location is the cytosol. Its function is as follows. May be involved in endocytic recycling of growth factor receptors such as EGFR. The polypeptide is Alpha- and gamma-adaptin-binding protein p34 (Aagab) (Mus musculus (Mouse)).